The chain runs to 311 residues: 4-hydroxy-3-methylbut-2-enyl diphosphate reductase (311 aa).

C12 is a binding site for [4Fe-4S] cluster. 2 residues coordinate (2E)-4-hydroxy-3-methylbut-2-enyl diphosphate: H41 and H74. Positions 41 and 74 each coordinate dimethylallyl diphosphate. 2 residues coordinate isopentenyl diphosphate: H41 and H74. C96 is a binding site for [4Fe-4S] cluster. H124 contacts (2E)-4-hydroxy-3-methylbut-2-enyl diphosphate. Dimethylallyl diphosphate is bound at residue H124. H124 is an isopentenyl diphosphate binding site. E126 acts as the Proton donor in catalysis. Residue T168 coordinates (2E)-4-hydroxy-3-methylbut-2-enyl diphosphate. A [4Fe-4S] cluster-binding site is contributed by C198. 4 residues coordinate (2E)-4-hydroxy-3-methylbut-2-enyl diphosphate: S226, S227, N228, and S270. Residues S226, S227, N228, and S270 each coordinate dimethylallyl diphosphate. Isopentenyl diphosphate-binding residues include S226, S227, N228, and S270.

The protein belongs to the IspH family. The cofactor is [4Fe-4S] cluster.

The catalysed reaction is isopentenyl diphosphate + 2 oxidized [2Fe-2S]-[ferredoxin] + H2O = (2E)-4-hydroxy-3-methylbut-2-enyl diphosphate + 2 reduced [2Fe-2S]-[ferredoxin] + 2 H(+). The enzyme catalyses dimethylallyl diphosphate + 2 oxidized [2Fe-2S]-[ferredoxin] + H2O = (2E)-4-hydroxy-3-methylbut-2-enyl diphosphate + 2 reduced [2Fe-2S]-[ferredoxin] + 2 H(+). Its pathway is isoprenoid biosynthesis; dimethylallyl diphosphate biosynthesis; dimethylallyl diphosphate from (2E)-4-hydroxy-3-methylbutenyl diphosphate: step 1/1. The protein operates within isoprenoid biosynthesis; isopentenyl diphosphate biosynthesis via DXP pathway; isopentenyl diphosphate from 1-deoxy-D-xylulose 5-phosphate: step 6/6. Functionally, catalyzes the conversion of 1-hydroxy-2-methyl-2-(E)-butenyl 4-diphosphate (HMBPP) into a mixture of isopentenyl diphosphate (IPP) and dimethylallyl diphosphate (DMAPP). Acts in the terminal step of the DOXP/MEP pathway for isoprenoid precursor biosynthesis. This chain is 4-hydroxy-3-methylbut-2-enyl diphosphate reductase, found in Alcanivorax borkumensis (strain ATCC 700651 / DSM 11573 / NCIMB 13689 / SK2).